Here is a 523-residue protein sequence, read N- to C-terminus: MSLVSQNARHCSAEITADYGDGRGEIQATNASGSPTSMLVVDAPQCPQAPINSQCVNTSQAVQDPNDLEVLIDEQSRRLGALRVHDPLEDRSIALVNFMRMKSQTEGSIQQSEMLEFLREYSDQFPEILRRASAHLDQVFGLNLRVIDPQADTYNLVSKRGFQITDRIAESLDMPKASLLALVLGHILLNGNRAREASIWDLLLKVDMWDKPQRINNLFGNTRNLLTTDFVCMRFLEYWPVYGTNPLEFEFLWGSRAHREITKMEALKFVSDAHDEEPWSWPEEYNKALEGDKTKERSLTAGLEFWSEDTMNDKANDLVQLAISVTEEMLPIHQDELLAHTGKEFEDVFPNILNRATLILDMFYGLSLIEVDTSEHIYLLVQQPESEEEQVMLESLGRPTQEYVMPILGLIFLMGNRVKEANVWNLLRRFSVDVGRKHSITRKLMRQRYLECRPLSYSNPVEYELLWGPRAHHETIKMKVLEYMARLYRKRPQNWPEQYREAVEDEEARAKSEATIMFFLDPT.

MAGE domains lie at Leu-88–Ala-288 and Met-311–Ala-502.

The sequence is that of Melanoma-associated antigen E2 (MAGEE2) from Homo sapiens (Human).